The primary structure comprises 305 residues: Tyrosine recombinase XerD (305 aa).

The region spanning 2-87 is the Core-binding (CB) domain; sequence SQGEAWADAF…AVRQFYRFVL (86 aa). The region spanning 108 to 295 is the Tyr recombinase domain; it reads PLPKVLERDE…AGEHLAHIVQ (188 aa). Catalysis depends on residues R149, K173, H247, R250, and H273. Y282 serves as the catalytic O-(3'-phospho-DNA)-tyrosine intermediate.

This sequence belongs to the 'phage' integrase family. XerD subfamily. Forms a cyclic heterotetrameric complex composed of two molecules of XerC and two molecules of XerD.

The protein localises to the cytoplasm. Functionally, site-specific tyrosine recombinase, which acts by catalyzing the cutting and rejoining of the recombining DNA molecules. The XerC-XerD complex is essential to convert dimers of the bacterial chromosome into monomers to permit their segregation at cell division. It also contributes to the segregational stability of plasmids. In Caulobacter vibrioides (strain ATCC 19089 / CIP 103742 / CB 15) (Caulobacter crescentus), this protein is Tyrosine recombinase XerD.